Here is a 113-residue protein sequence, read N- to C-terminus: Putative pterin-4-alpha-carbinolamine dehydratase (113 aa).

It belongs to the pterin-4-alpha-carbinolamine dehydratase family.

It catalyses the reaction (4aS,6R)-4a-hydroxy-L-erythro-5,6,7,8-tetrahydrobiopterin = (6R)-L-erythro-6,7-dihydrobiopterin + H2O. The chain is Putative pterin-4-alpha-carbinolamine dehydratase from Nitrosomonas eutropha (strain DSM 101675 / C91 / Nm57).